Here is a 446-residue protein sequence, read N- to C-terminus: Iroquois-class homeodomain protein IRX-6 (446 aa).

The segment at residues 146–208 (GAGRRKNATR…NARRRLKKEN (63 aa)) is a DNA-binding region (homeobox). Disordered regions lie at residues 208–273 (NKMT…EDEE) and 362–394 (AVEG…RLSV). The segment covering 217 to 226 (KGGEERKAEG) has biased composition (basic and acidic residues). Positions 256 to 273 (LEDLEEEEEEEEEAEDEE) are enriched in acidic residues.

This sequence belongs to the TALE/IRO homeobox family.

Its subcellular location is the nucleus. In terms of biological role, transcription factor. Binds to the iroquois binding site (IBS) motif of target genes to regulate gene expression; functions as a transcriptional activator or repressor. Modulates expression of RCVRN, VSX1, BHLHE22/BHLHB5 and TACR3/Nk3r. Required downstream of retinal bipolar cell specification for the terminal differentiation of type 2, type 3a and possibly type 6 bipolar cells. The sequence is that of Iroquois-class homeodomain protein IRX-6 (IRX6) from Homo sapiens (Human).